The following is a 498-amino-acid chain: ATP synthase subunit alpha 1 (498 aa).

164–171 (GNRQSGKT) contacts ATP.

This sequence belongs to the ATPase alpha/beta chains family. F-type ATPases have 2 components, CF(1) - the catalytic core - and CF(0) - the membrane proton channel. CF(1) has five subunits: alpha(3), beta(3), gamma(1), delta(1), epsilon(1). CF(0) has three main subunits: a(1), b(2) and c(9-12). The alpha and beta chains form an alternating ring which encloses part of the gamma chain. CF(1) is attached to CF(0) by a central stalk formed by the gamma and epsilon chains, while a peripheral stalk is formed by the delta and b chains.

The protein resides in the cell membrane. It carries out the reaction ATP + H2O + 4 H(+)(in) = ADP + phosphate + 5 H(+)(out). Its function is as follows. Produces ATP from ADP in the presence of a proton gradient across the membrane. The alpha chain is a regulatory subunit. The protein is ATP synthase subunit alpha 1 of Listeria welshimeri serovar 6b (strain ATCC 35897 / DSM 20650 / CCUG 15529 / CIP 8149 / NCTC 11857 / SLCC 5334 / V8).